A 1430-amino-acid polypeptide reads, in one-letter code: rRNA biogenesis protein RRP5 (1430 aa).

S1 motif domains are found at residues 74 to 160, 176 to 238, 261 to 329, 447 to 511, 531 to 592, and 697 to 771; these read DMLV…LSLK, GFIF…CTCV, GSIV…LTLN, GDLV…VSNR, GNVY…LTLP, and QVGD…VSAK. The disordered stretch occupies residues 1041-1145; the sequence is KITNGQKKTQ…AKEKAKAEIK (105 aa). The span at 1043 to 1053 shows a compositional bias: polar residues; that stretch reads TNGQKKTQPLT. 2 stretches are compositionally biased toward basic and acidic residues: residues 1057–1082 and 1135–1145; these read VKEKPKQNGKLFFEDKTPAKNAKSET and SAKEKAKAEIK. A coiled-coil region spans residues 1119–1157; it reads LNVAETQKNAAKKKRLSAKEKAKAEIKEEQRLREIEERN. HAT repeat units lie at residues 1161-1193, 1195-1232, 1265-1297, 1299-1333, 1335-1367, and 1369-1404; these read KARLETIDQYERLVIAQPNNSISWLKYIAFLLS, TEIEKARALARRAISTISFRETQELRNMWSALLNMELV, KRKDRLSSVLTTVLNKFKTELRVWPVAAEAYFW, GKSDQVHNLLQRALRALPNQEHIPCIVSFAKLYAK, DNNDMAQTLLDDVVTSYPKRIDIWSVYVDMLIK, and GLIDSARNVLERAVVQKLKPNKMQVIYKKYLQLEEN.

Its subcellular location is the nucleus. The protein resides in the nucleolus. Involved in rRNA processing or maturation during ribosome biogenesis. The sequence is that of rRNA biogenesis protein RRP5 from Drosophila melanogaster (Fruit fly).